Consider the following 604-residue polypeptide: Proline--tRNA ligase (604 aa).

Belongs to the class-II aminoacyl-tRNA synthetase family. ProS type 1 subfamily. In terms of assembly, homodimer.

Its subcellular location is the cytoplasm. It catalyses the reaction tRNA(Pro) + L-proline + ATP = L-prolyl-tRNA(Pro) + AMP + diphosphate. Catalyzes the attachment of proline to tRNA(Pro) in a two-step reaction: proline is first activated by ATP to form Pro-AMP and then transferred to the acceptor end of tRNA(Pro). As ProRS can inadvertently accommodate and process non-cognate amino acids such as alanine and cysteine, to avoid such errors it has two additional distinct editing activities against alanine. One activity is designated as 'pretransfer' editing and involves the tRNA(Pro)-independent hydrolysis of activated Ala-AMP. The other activity is designated 'posttransfer' editing and involves deacylation of mischarged Ala-tRNA(Pro). The misacylated Cys-tRNA(Pro) is not edited by ProRS. This Trichormus variabilis (strain ATCC 29413 / PCC 7937) (Anabaena variabilis) protein is Proline--tRNA ligase.